The chain runs to 491 residues: Chromosomal replication initiator protein DnaA (491 aa).

A domain I, interacts with DnaA modulators region spans residues Met-1–Leu-69. A domain II region spans residues Leu-69–Leu-154. The interval Pro-155–Ser-371 is domain III, AAA+ region. ATP-binding residues include Gly-199, Gly-201, Lys-202, and Thr-203. Positions Lys-372–Arg-491 are domain IV, binds dsDNA.

The protein belongs to the DnaA family. In terms of assembly, oligomerizes as a right-handed, spiral filament on DNA at oriC.

Its subcellular location is the cytoplasm. Functionally, plays an essential role in the initiation and regulation of chromosomal replication. ATP-DnaA binds to the origin of replication (oriC) to initiate formation of the DNA replication initiation complex once per cell cycle. Binds the DnaA box (a 9 base pair repeat at the origin) and separates the double-stranded (ds)DNA. Forms a right-handed helical filament on oriC DNA; dsDNA binds to the exterior of the filament while single-stranded (ss)DNA is stabiized in the filament's interior. The ATP-DnaA-oriC complex binds and stabilizes one strand of the AT-rich DNA unwinding element (DUE), permitting loading of DNA polymerase. After initiation quickly degrades to an ADP-DnaA complex that is not apt for DNA replication. Binds acidic phospholipids. The polypeptide is Chromosomal replication initiator protein DnaA (Francisella tularensis subsp. holarctica (strain FTNF002-00 / FTA)).